A 274-amino-acid polypeptide reads, in one-letter code: MTRSHRLLLLLLLIFQTAQRLTTADPNDEACLKNLRQNLEDPASNLRNWTNSVFSNPCSGFTSYLPGATCNNGRIYKLSLTNLSLRGSISPFLSNCTNLQSLDLSSNQISGVIPPEIQYLVNLAVLNLSSNHLSGEITPQLALCAYLNVIDLHDNELSGQIPQQLGLLARLSAFDVSNNKLSGQIPTYLSNRTGNFPRFNASSFIGNKGLYGYPLQEMMMKSKGLSVMAIVGIGLGSGIASLMISFTGVCLWLRITEKKIVEEEGKISQSMPDY.

An N-terminal signal peptide occupies residues 1 to 24 (MTRSHRLLLLLLLIFQTAQRLTTA). Topologically, residues 25–223 (DPNDEACLKN…PLQEMMMKSK (199 aa)) are extracellular. N-linked (GlcNAc...) asparagine glycans are attached at residues Asn-48, Asn-82, and Asn-95. LRR repeat units lie at residues 96 to 121 (CTNL…QYLV), 123 to 144 (LAVL…LALC), 145 to 168 (AYLN…LGLL), and 169 to 192 (ARLS…LSNR). N-linked (GlcNAc...) asparagine glycosylation occurs at Asn-127. Asn-191 and Asn-200 each carry an N-linked (GlcNAc...) asparagine glycan. The helical transmembrane segment at 224-244 (GLSVMAIVGIGLGSGIASLMI) threads the bilayer. Residues 245 to 274 (SFTGVCLWLRITEKKIVEEEGKISQSMPDY) are Cytoplasmic-facing.

The protein belongs to the RLP family.

The protein localises to the cell membrane. The chain is Receptor-like protein 44 from Arabidopsis thaliana (Mouse-ear cress).